We begin with the raw amino-acid sequence, 377 residues long: Ribosomal RNA large subunit methyltransferase G (377 aa).

The protein belongs to the methyltransferase superfamily. RlmG family.

It is found in the cytoplasm. It carries out the reaction guanosine(1835) in 23S rRNA + S-adenosyl-L-methionine = N(2)-methylguanosine(1835) in 23S rRNA + S-adenosyl-L-homocysteine + H(+). In terms of biological role, specifically methylates the guanine in position 1835 (m2G1835) of 23S rRNA. The sequence is that of Ribosomal RNA large subunit methyltransferase G from Streptomyces coelicolor (strain ATCC BAA-471 / A3(2) / M145).